A 635-amino-acid polypeptide reads, in one-letter code: MSCFKQDVYNCITPKTLSFVKSFLKQRSNDPAASTHLSSARVVEWNLNGIEVDSRARDELKAAVNILFRIMKYIGQFPFPKLSSKDDSEIISLTVQEFVIASVFISGRYRKLFGNDNGEIIWKFLFIALSHQSDMNFFEDDLDHLFTIPLKYPIEDGDSIAIKAQKVDWGGLEIIKKLSNLDMNQLQLQPSLFLNLTTLFLLTESIPNQKHNKMHDQFVHNLTTWKDFRKYSLDLLRYMNNDLSKDDLNSQTLSWSEFSLGMNNLLAPFVEVNLRKVVENNVLNISLPFFETSANSKMDGTGDEVPNGATTGTKTTMKENEGAGVEAQSKEETKVGNDVESSFGSKLVSISLIAYISSMLRGIGSTIEVTRFNAIKLFAGLEAGFSIRSLENKIYKWHAPTLLFVSGKRIKQRTIDTNRRYQEFDETYPKFFQANEDLLKSWQYTNDRITYCVLINQPWQNSNKKNFGDEKSLILSLEPRADYYTSLHSEILKGQLIYFNNSGMGLGFGNAQPLNKSNNKKYYPGDVSLTIESNLEFAVFRHLGSLSTNATTYFNRSRLPSTVAHEDFEDRFLITDLEVWGIGSKKELEEQQRQWKWEEQQAEARQSVNIRNMGEERAFLEMAGLVGNNGSGGSL.

Residues 297–333 (KMDGTGDEVPNGATTGTKTTMKENEGAGVEAQSKEET) form a disordered region. Residues 346 to 583 (KLVSISLIAY…ITDLEVWGIG (238 aa)) form the TLDc domain.

The protein belongs to the RTC5 family.

It localises to the cytoplasm. Functionally, may be involved in a process influencing telomere capping. This is Restriction of telomere capping protein 5 (RTC5) from Lodderomyces elongisporus (strain ATCC 11503 / CBS 2605 / JCM 1781 / NBRC 1676 / NRRL YB-4239) (Yeast).